The sequence spans 455 residues: Putative FBD-associated F-box protein At5g56400 (455 aa).

The F-box domain maps to 32–81; that stretch reads VDKISDLPEDLLVHILSLLPTTNDIVATSGVSKRWESLWTKVHKLRFNDR. Residues 372 to 421 form the FBD domain; sequence WNQQPSYVPECLTKSLEIFEWRNYKATFRERDVAVYILKNSTCLKKTVIS.

The polypeptide is Putative FBD-associated F-box protein At5g56400 (Arabidopsis thaliana (Mouse-ear cress)).